The primary structure comprises 124 residues: Small ribosomal subunit protein uS12 (124 aa).

A 3-methylthioaspartic acid modification is found at aspartate 89. The disordered stretch occupies residues 103–124 (DTAGVKDRRQSRSKYGAKSPKE).

Belongs to the universal ribosomal protein uS12 family. In terms of assembly, part of the 30S ribosomal subunit. Contacts proteins S8 and S17. May interact with IF1 in the 30S initiation complex.

Its function is as follows. With S4 and S5 plays an important role in translational accuracy. In terms of biological role, interacts with and stabilizes bases of the 16S rRNA that are involved in tRNA selection in the A site and with the mRNA backbone. Located at the interface of the 30S and 50S subunits, it traverses the body of the 30S subunit contacting proteins on the other side and probably holding the rRNA structure together. The combined cluster of proteins S8, S12 and S17 appears to hold together the shoulder and platform of the 30S subunit. In Prochlorococcus marinus (strain NATL2A), this protein is Small ribosomal subunit protein uS12.